The following is an 888-amino-acid chain: Pumilio homology domain family member 4 (888 aa).

Phosphothreonine occurs at positions 205, 212, and 252. Disordered stretches follow at residues 236–270 (KAKK…IPPT) and 467–551 (MNSA…RKIE). A compositionally biased stretch (polar residues) spans 243–270 (GANNTAKTRTQSISFDNTPSSTSFIPPT). Ser256 is modified (phosphoserine). Low complexity-rich tracts occupy residues 478–499 (NNNS…YNNK) and 521–543 (NNNN…NSNS). The PUM-HD domain occupies 539 to 888 (TNSNSAEKQR…RIIGMLHLDS (350 aa)). 8 Pumilio repeats span residues 563–598 (QYIG…AIFE), 599–634 (ETKD…VLTK), 635–671 (ISSP…IVVD), 672–707 (SLRP…FIFD), 708–743 (AISD…NLCD), 744–783 (KLLA…KIVH), 784–821 (LLKP…EILN), and 823–861 (GGET…RLSE).

Is not essential for haploid growth, but may affect diploid formation. In Saccharomyces cerevisiae (strain ATCC 204508 / S288c) (Baker's yeast), this protein is Pumilio homology domain family member 4 (PUF4).